Reading from the N-terminus, the 430-residue chain is MDLDMNGGNKRVFQRLGGGSNRPTTDSNQKVCFHWRAGRCNRYPCPYLHRELPGPGSGPVAASSNKRVADESGFAGPSHRRGPGFSGTANNWGRFGGNRTVTKTEKLCKFWVDGNCPYGDKCRYLHCWSKGDSFSLLTQLDGHQKVVTGIALPSGSDKLYTASKDETVRIWDCASGQCTGVLNLGGEVGCIISEGPWLLVGMPNLVKAWNIQNNADLSLNGPVGQVYSLVVGTDLLFAGTQDGSILVWRYNSTTSCFDPAASLLGHTLAVVSLYVGANRLYSGAMDNSIKVWSLDNLQCIQTLTEHTSVVMSLICWDQFLLSCSLDNTVKIWAATEGGNLEVTYTHKEEYGVLALCGVHDAEAKPVLLCSCNDNSLHLYDLPSFTERGKILAKQEIRSIQIGPGGIFFTGDGSGQVKVWKWSTESTPILS.

Disordered stretches follow at residues Met1 to Ser27 and Gly56 to Asn90. Residues Asp26–Leu52 form a C3H1-type 1 zinc finger. The C3H1-type 2 zinc-finger motif lies at Thr102–Ser129. WD repeat units lie at residues Gly142–Asn183, Gly221–Asp258, Gly265–Thr304, His306–Val342, Thr345–Lys389, and Leu391–Leu429.

The polypeptide is Zinc finger CCCH domain-containing protein 48 (ZFWD1) (Arabidopsis thaliana (Mouse-ear cress)).